The following is a 1530-amino-acid chain: Coiled-coil domain-containing protein 141 (1530 aa).

Thr91 is modified (phosphothreonine). Coiled-coil stretches lie at residues 642-706 (VKNE…EALM), 758-783 (VKEK…QDYE), and 861-970 (SNVS…KTSD). Positions 1210–1241 (SPDDISLPPLPGSPESPLAPSDMEVEEPVSSS) are disordered. The 122-residue stretch at 1409-1530 (PNFSRLLSNV…VSLMYWLLTQ (122 aa)) folds into the Ig-like domain.

Interacts with DISC1. Interacts preferentially with phosphorylated forms of myosin regulatory light chain (MRLC). Interacts (via the N-terminal region) with HDAC6; inhibits the deacetylase activity of HDAC6. Interacts with KIBRA (via the C-terminal region); retains AMPAR in the cytosol after internalization. In terms of processing, ubiquitinated and degradated by the CDC20-APC/C pathway. During brain development, CDC20-APC/C complex degrades CCDC141 after centrosome translocation into the dilated area. CCDC141 is restabilized in the dilation until the centrosome enters the dilation, at which point it is once again immediately destabilized by CDC20-APC/C complex. The oscillatory regulation of CCDC141 protein is needed for proper cortical migration. Phosphorylation at Thr-91 by PLK1 affects CCDC141 degradation.

It is found in the cytoplasm. It localises to the cytoskeleton. The protein resides in the microtubule organizing center. The protein localises to the centrosome. Functionally, plays a critical role in cortical radial and GnRH neurons migration during brain development. Regulates cortical radial migration by negatively controlling the activity of histone deacetylase 6 (HDAC6) and promotes centrosome maturation. CAMDI is required for dilation formation of cortical neurons during radial migration. Plays a critical role in learning and memory performance through regulation of AMPA-selective glutamate receptors (AMPARs) cell surface expression in competition with KIBRA. The sequence is that of Coiled-coil domain-containing protein 141 (CCDC141) from Homo sapiens (Human).